The following is an 89-amino-acid chain: RNA-binding protein Hfq (89 aa).

The 60-residue stretch at 9-68 (DPFLNALRRERVPVSIYLVNGIKLQGQVESFDQFVILLKNTVSQMVYKHAISTVVPARAL) folds into the Sm domain.

The protein belongs to the Hfq family. Homohexamer.

In terms of biological role, RNA chaperone that binds small regulatory RNA (sRNAs) and mRNAs to facilitate mRNA translational regulation in response to envelope stress, environmental stress and changes in metabolite concentrations. Also binds with high specificity to tRNAs. The chain is RNA-binding protein Hfq from Shewanella denitrificans (strain OS217 / ATCC BAA-1090 / DSM 15013).